We begin with the raw amino-acid sequence, 669 residues long: Zeaxanthin epoxidase, chloroplastic (669 aa).

The transit peptide at 1-49 directs the protein to the chloroplast; that stretch reads MYSTVFYTSVHPSTSVLSRKQLPLLISKDFSAELYHSLPCRSLENGHIN. FAD contacts are provided by residues 87–115 and 365–378; these read KVLV…LVFE and TFSW…LLGD. The region spanning 553 to 617 is the FHA domain; it reads IVLSRDEDVP…HGTWVTDNEG (65 aa).

The cofactor is FAD.

It localises to the plastid. Its subcellular location is the chloroplast. The catalysed reaction is all-trans-zeaxanthin + 4 reduced [2Fe-2S]-[ferredoxin] + 2 O2 + 4 H(+) = all-trans-violaxanthin + 4 oxidized [2Fe-2S]-[ferredoxin] + 2 H2O. The protein operates within plant hormone biosynthesis; abscisate biosynthesis. Its function is as follows. Converts zeaxanthin into antheraxanthin and subsequently violaxanthin. Involved in the epoxidation of zeaxanthin. Plays an important role in resistance to stresses, seed development and dormancy. In Solanum lycopersicum (Tomato), this protein is Zeaxanthin epoxidase, chloroplastic.